An 80-amino-acid polypeptide reads, in one-letter code: RNA-binding protein KhpA (80 aa).

The region spanning 33–80 (GRTVEVHVHPDDLGKVIGRGGRTATALRTLVAGIGGRGIRVDVVDTDQ) is the KH domain.

This sequence belongs to the KhpA RNA-binding protein family.

It is found in the cytoplasm. Functionally, a probable RNA-binding protein. The polypeptide is RNA-binding protein KhpA (Mycobacterium bovis (strain ATCC BAA-935 / AF2122/97)).